The chain runs to 314 residues: Homoserine kinase (314 aa).

95-105 lines the ATP pocket; the sequence is PHSRGLGSSAS.

This sequence belongs to the GHMP kinase family. Homoserine kinase subfamily.

Its subcellular location is the cytoplasm. It catalyses the reaction L-homoserine + ATP = O-phospho-L-homoserine + ADP + H(+). It participates in amino-acid biosynthesis; L-threonine biosynthesis; L-threonine from L-aspartate: step 4/5. Catalyzes the ATP-dependent phosphorylation of L-homoserine to L-homoserine phosphate. In Mycobacterium ulcerans (strain Agy99), this protein is Homoserine kinase.